The following is a 1139-amino-acid chain: Phospholipid-transporting ATPase tat-1 (1139 aa).

3 helical membrane passes run 78 to 98 (YTTA…EIFE), 276 to 296 (IIFL…GSEI), and 318 to 338 (SFLW…PISL). Residue D388 is the 4-aspartylphosphate intermediate of the active site. Helical transmembrane passes span 831 to 851 (ICLY…GQTI), 855 to 875 (WTIG…LGLF), 901 to 921 (IGNF…LFFL), 935 to 955 (GLTG…VATV), 972 to 992 (VACI…SLVF), and 1013 to 1033 (YTFW…DLVI).

Belongs to the cation transport ATPase (P-type) (TC 3.A.3) family. Type IV subfamily.

The protein resides in the cell membrane. It is found in the early endosome membrane. It localises to the recycling endosome membrane. It catalyses the reaction ATP + H2O + phospholipidSide 1 = ADP + phosphate + phospholipidSide 2.. The enzyme catalyses a 1,2-diacyl-sn-glycero-3-phospho-L-serine(out) + ATP + H2O = a 1,2-diacyl-sn-glycero-3-phospho-L-serine(in) + ADP + phosphate + H(+). In terms of biological role, transports phosphatidylserine from the outer to the inner leaflet of the plasma membrane, thereby maintaining the enrichment of this phospholipid in the inner leaflet. Ectopic exposure of phosphatidylserine on the cell surface may result in removal of living cells by neighboring phagocytes. Regulation of the phosphatidylserine distribution in plasma membranes is likely to help in the maintenance and control of the membrane surface charge. Plays a role in the formation of the tubular membrane structure and in membrane trafficking and is specifically involved in the recycling and degradation of endocytic cargo, likely with its chaperone protein chat-1. In Caenorhabditis elegans, this protein is Phospholipid-transporting ATPase tat-1 (tat-1).